Here is an 864-residue protein sequence, read N- to C-terminus: Alpha-glucosidase (864 aa).

Positions 1-22 are cleaved as a signal peptide; it reads MAKVSFIFVAIALITGNVLCQT. N-linked (GlcNAc...) asparagine glycans are attached at residues Asn187, Asn364, and Asn406. Asp430 acts as the Nucleophile in catalysis. The active site involves Glu433. Residues Asn466 and Asn500 are each glycosylated (N-linked (GlcNAc...) asparagine). Asp567 (proton donor) is an active-site residue. N-linked (GlcNAc...) asparagine glycosylation is found at Asn568 and Asn734.

This sequence belongs to the glycosyl hydrolase 31 family.

It catalyses the reaction Hydrolysis of terminal, non-reducing (1-&gt;4)-linked alpha-D-glucose residues with release of alpha-D-glucose.. Functionally, hydrolyzes not only malto-oligosaccharides but also soluble starch. This Mucor javanicus protein is Alpha-glucosidase.